The primary structure comprises 243 residues: MNYSPRIQDIPASERPRERLVAVGAKYLSNAELIAILISTGDRHRNLSAVGLAQFILQTCSQGKRDPFDMLRHTTPQELTSIPGVGLAKAAQILAGIELGKRIFQAKPSEKIIVDSPEAAAIALSNDLMWQDQERFAVLCLDVKNTLIATRVVTIGLATETLAHPREIFREVIKHGATRLIIAHNHPSGNVDPSPEDLQLTERLLQSAQILGIPLLDHLILGRDNFGSLRQKTALWDSYPQPE.

Positions 112–235 constitute an MPN domain; sequence IIVDSPEAAA…FGSLRQKTAL (124 aa). His184, His186, and Asp197 together coordinate Zn(2+). Residues 184 to 197 carry the JAMM motif motif; the sequence is HNHPSGNVDPSPED.

This sequence belongs to the UPF0758 family.

In Picosynechococcus sp. (strain ATCC 27264 / PCC 7002 / PR-6) (Agmenellum quadruplicatum), this protein is UPF0758 protein SYNPCC7002_A0220.